The primary structure comprises 199 residues: MDFKIEYTWDSFPVSHEPVRIRLNPCDKGLKMEVSAPFFNDPPAPLGEPGKPFSELWNYEVVEAFFLNNTTEQYLEVELCPHGQHLVLLLSGRRNVWKKELALSFKVSRGETHWEGEAFLPWSYFPSKVTRFNSFAIHGSNDKRVYEALYPVPQPELQQGQNPDFHRLEYFKPFSFNTLLGEEWKQPESDLWLIEKSDI.

The protein belongs to the UPF0462 family.

This chain is UPF0462 protein C4orf33 homolog, found in Rattus norvegicus (Rat).